Consider the following 79-residue polypeptide: Omega-phylotoxin-To1a (79 aa).

Residues 1-21 (MKKTFCFILILVCIVLKSVNA) form the signal peptide. A propeptide spanning residues 22 to 38 (EEEDNFEESSLEMETAR) is cleaved from the precursor. Cystine bridges form between Cys39–Cys59, Cys46–Cys63, Cys58–Cys78, and Cys65–Cys76.

In terms of tissue distribution, expressed by the venom duct.

It is found in the secreted. Its function is as follows. Insect-specific toxin that probably acts as an inhibitor of presynaptic insect calcium channels, presumably Cav2 subtype. In vivo, induces immediate paralysis on insects, followed by death when high doses are injected. The protein is Omega-phylotoxin-To1a of Tibellus oblongus (Oblong running crab spider).